The primary structure comprises 77 residues: Putative antitoxin VapB24 (77 aa).

In terms of biological role, possibly the antitoxin component of a type II toxin-antitoxin (TA) system. Its cognate toxin is VapC24 (Potential). This Mycobacterium tuberculosis (strain CDC 1551 / Oshkosh) protein is Putative antitoxin VapB24 (vapB24).